The sequence spans 278 residues: MVQVGAHTSIAGGVDNAVEEQLEYDGTCGQIFTHSPQVWQDPNIGDEEATAFRDRSAEAGVGPWVIHSSYLVNLCTPKDDLREKSIDSMQKEVDAAATLHIPYVNVHLGAHTGAGVEQGLDNAASALEELDIPDGVTVLIESDAGSGTKLGSTFEELAGVLDRCDQPLDVCLDTAHMFAAGYDLSTPEGVAETFEAFDETVGLDHLEYIHLNDSKHDCGTNKDEHAHIGEGKIGEAGMRAFINHEAVADVPFVLETPTENGKSYPWNIKRVRELYEEA.

Zn(2+)-binding residues include histidine 67, histidine 107, glutamate 141, aspartate 173, histidine 176, histidine 210, aspartate 223, histidine 225, and glutamate 255.

Belongs to the AP endonuclease 2 family. Zn(2+) serves as cofactor.

It catalyses the reaction Endonucleolytic cleavage to 5'-phosphooligonucleotide end-products.. In terms of biological role, endonuclease IV plays a role in DNA repair. It cleaves phosphodiester bonds at apurinic or apyrimidinic (AP) sites, generating a 3'-hydroxyl group and a 5'-terminal sugar phosphate. The sequence is that of Probable endonuclease 4 from Natronomonas pharaonis (strain ATCC 35678 / DSM 2160 / CIP 103997 / JCM 8858 / NBRC 14720 / NCIMB 2260 / Gabara) (Halobacterium pharaonis).